A 367-amino-acid polypeptide reads, in one-letter code: NAD(P)H-quinone oxidoreductase subunit 1, chloroplastic (367 aa).

7 helical membrane-spanning segments follow: residues 30 to 50 (LFPI…IVWL), 98 to 118 (FSIG…VIPF), 127 to 147 (LSIG…GLLM), 164 to 184 (AAAQ…SISL), 273 to 293 (LFVT…IFVP), 304 to 324 (VFGT…FLFI), and 340 to 360 (LLNL…LLTT).

Belongs to the complex I subunit 1 family. As to quaternary structure, NDH is composed of at least 16 different subunits, 5 of which are encoded in the nucleus.

The protein resides in the plastid. The protein localises to the chloroplast thylakoid membrane. It carries out the reaction a plastoquinone + NADH + (n+1) H(+)(in) = a plastoquinol + NAD(+) + n H(+)(out). The enzyme catalyses a plastoquinone + NADPH + (n+1) H(+)(in) = a plastoquinol + NADP(+) + n H(+)(out). NDH shuttles electrons from NAD(P)H:plastoquinone, via FMN and iron-sulfur (Fe-S) centers, to quinones in the photosynthetic chain and possibly in a chloroplast respiratory chain. The immediate electron acceptor for the enzyme in this species is believed to be plastoquinone. Couples the redox reaction to proton translocation, and thus conserves the redox energy in a proton gradient. The sequence is that of NAD(P)H-quinone oxidoreductase subunit 1, chloroplastic from Nicotiana tabacum (Common tobacco).